Consider the following 97-residue polypeptide: UPF0213 protein YE0453 (97 aa).

Residues 4–79 (SLWHLYLLRT…KQLSKQQKEK (76 aa)) form the GIY-YIG domain.

This sequence belongs to the UPF0213 family.

The sequence is that of UPF0213 protein YE0453 from Yersinia enterocolitica serotype O:8 / biotype 1B (strain NCTC 13174 / 8081).